We begin with the raw amino-acid sequence, 337 residues long: MVNVGINGFGRIGRLVLRNALQMQILTVVAVNDPFLDVEYMAYLFKYDSVHGRYQGKVETKDGKLIIDGHKIAAFAEREPANIKWADCGAEYIVESTGVFKTEELAKEHLKGGAKKVVITAPGSGVPTYVVGVNLDKYDPKEVVISNASCTTNCLAVLAKVINDKFGIVEGLMTTVHATTATQKTVDAPAKKDWRSGRSVTNNIIPASTGAAKAVTKAIPDLEGKLTGLAFRVPTLDVSVVDLVVRLEKETSYDDVKKAMRDAADGKHPGIEKGIVDYTEEDVVSTDFVGSNYSMIFDAKAGIALNSRFMKLVAWYDNEWGYARRVCDEVVYVAKKN.

NAD(+) contacts are provided by residues 11 to 12 (RI), aspartate 33, and arginine 78. D-glyceraldehyde 3-phosphate is bound by residues 149–151 (SCT), threonine 180, 209–210 (TG), and arginine 232. The active-site Nucleophile is cysteine 150. Asparagine 318 serves as a coordination point for NAD(+).

This sequence belongs to the glyceraldehyde-3-phosphate dehydrogenase family. In terms of assembly, homotetramer.

It localises to the cytoplasm. The catalysed reaction is D-glyceraldehyde 3-phosphate + phosphate + NAD(+) = (2R)-3-phospho-glyceroyl phosphate + NADH + H(+). It participates in carbohydrate degradation; glycolysis; pyruvate from D-glyceraldehyde 3-phosphate: step 1/5. The polypeptide is Glyceraldehyde-3-phosphate dehydrogenase 1 (gpd1) (Agaricus bisporus (White button mushroom)).